A 449-amino-acid polypeptide reads, in one-letter code: Uric acid permease PucJ (449 aa).

13 consecutive transmembrane segments (helical) span residues 11–31 (LSLQ…LLVG), 41–61 (LSYL…LQTL), 67–87 (GIGL…MIAI), 91–111 (YGIH…FLFA), 119–139 (VLFP…SLVP), 158–178 (EYGS…ILVL), 191–211 (VLIG…VSFS), 229–249 (APAF…VIIV), 277–297 (AEGI…NTFA), 313–333 (IVVT…IAAL), 334–354 (ASAV…GMVI), 372–392 (LLTI…PGIF), and 401–421 (ILVS…NLFF).

The protein belongs to the nucleobase:cation symporter-2 (NCS2) (TC 2.A.40) family.

The protein resides in the cell membrane. Its function is as follows. Uptake of uric acid. The chain is Uric acid permease PucJ (pucJ) from Bacillus subtilis (strain 168).